Consider the following 479-residue polypeptide: Endoglucanase 20 (479 aa).

The first 21 residues, 1–21 (MGKLLVLMLVGMFLAFESLEA), serve as a signal peptide directing secretion. N-linked (GlcNAc...) asparagine glycosylation occurs at asparagine 29. The Nucleophile role is filled by aspartate 76. Histidine 398 is an active-site residue. Residue asparagine 442 is glycosylated (N-linked (GlcNAc...) asparagine). Active-site residues include aspartate 449 and glutamate 458.

This sequence belongs to the glycosyl hydrolase 9 (cellulase E) family.

Its subcellular location is the secreted. The catalysed reaction is Endohydrolysis of (1-&gt;4)-beta-D-glucosidic linkages in cellulose, lichenin and cereal beta-D-glucans.. The protein is Endoglucanase 20 of Arabidopsis thaliana (Mouse-ear cress).